Here is a 462-residue protein sequence, read N- to C-terminus: 2-(3-amino-3-carboxypropyl)histidine synthase subunit 1 (462 aa).

Positions 1 to 87 are disordered; it reads MEEDRRQTDL…AVATAKPRRA (87 aa). Polar residues predominate over residues 35-44; the sequence is ESAAQTQNGA. The [4Fe-4S] cluster site is built by Cys173, Cys276, and Cys406.

This sequence belongs to the DPH1/DPH2 family. DPH1 subfamily. Component of the 2-(3-amino-3-carboxypropyl)histidine synthase complex composed of DPH1, DPH2, DPH3 and a NADH-dependent reductase, predominantly CBR1. It depends on [4Fe-4S] cluster as a cofactor.

It localises to the cytoplasm. It catalyses the reaction L-histidyl-[translation elongation factor 2] + S-adenosyl-L-methionine = 2-[(3S)-amino-3-carboxypropyl]-L-histidyl-[translation elongation factor 2] + S-methyl-5'-thioadenosine + H(+). It participates in protein modification; peptidyl-diphthamide biosynthesis. In terms of biological role, catalyzes the first step of diphthamide biosynthesis, a post-translational modification of histidine which occurs in elongation factor 2. DPH1 and DPH2 transfer a 3-amino-3-carboxypropyl (ACP) group from S-adenosyl-L-methionine (SAM) to a histidine residue, the reaction is assisted by a reduction system comprising DPH3 and a NADH-dependent reductase, predominantly CBR1. This chain is 2-(3-amino-3-carboxypropyl)histidine synthase subunit 1 (DPH1), found in Gibberella zeae (strain ATCC MYA-4620 / CBS 123657 / FGSC 9075 / NRRL 31084 / PH-1) (Wheat head blight fungus).